A 183-amino-acid chain; its full sequence is Non-classical export protein 2 homolog (183 aa).

Residues 1 to 8 lie on the Cytoplasmic side of the membrane; it reads MVGIRQYG. Residues 9–29 form a helical membrane-spanning segment; that stretch reads VFTWVFRTFQLAIDTIVLALA. The Extracellular segment spans residues 30–44; the sequence is SALVNQQTSGGSPGK. A helical transmembrane segment spans residues 45–65; the sequence is INFSVAVGSFAILTFFLTAVG. Over 66–75 the chain is Cytoplasmic; that stretch reads RFLPTILGNP. A helical membrane pass occupies residues 76 to 96; it reads WLIAFYDFVNWVFALTGGCCI. Residues 97 to 131 are Extracellular-facing; that stretch reads AVAIRVHACDNQKYLDRNHYTQGSMRRCQELKALC. A helical transmembrane segment spans residues 132-152; the sequence is FFLWFMFGLYVASFIVQIFIA. Over 153-183 the chain is Cytoplasmic; sequence KNDTPNYTFRGRGRGKGSGPAVAPRPVMSAV. A disordered region spans residues 163–183; that stretch reads GRGRGKGSGPAVAPRPVMSAV.

The protein belongs to the NCE102 family.

It localises to the cytoplasm. Its subcellular location is the golgi apparatus membrane. The protein resides in the cell membrane. Functionally, involved in membrane organization and might act as a sensor of sphingolipids that regulates plasma membrane function. Involved in a novel pathway of export of proteins that lack a cleavable signal sequence. In Schizosaccharomyces pombe (strain 972 / ATCC 24843) (Fission yeast), this protein is Non-classical export protein 2 homolog (fhn1).